A 228-amino-acid chain; its full sequence is Ankyrin repeat domain-containing protein 46 (228 aa).

ANK repeat units lie at residues 11-40, 44-74, 77-103, and 107-138; these read QTNV…DPNI, RGRT…PLAT, QGNT…KIDI, and QGAT…EVKG. A helical membrane pass occupies residues 195 to 215; it reads VLLLILVIALLSLGIAYYVSG.

It localises to the membrane. In Rattus norvegicus (Rat), this protein is Ankyrin repeat domain-containing protein 46 (Ankrd46).